The following is a 487-amino-acid chain: MIILLLSIIIFILYIVKIFKNKSCCGNEIILPPGPISLPFIGNLHQLAIDPHLAIQKLMFKYGNVMTVYFANIKTVVISDPNYLKEVFVNQSHKTSDRYLMGTSRIIGNEKDILFSNGQYWKNYRQILAQSFLKLRDHKGITEKISLESVKLSQAFEWYATSGQVVNPCSLFKMYTLNVIMQLLYSHRSSYDLKGQHPIIDALKMVEESLAVGNVLDLFPILNIFLKKNKLKLVNNLQQVWSYSQDSIKEHREKLLINPEKIDDLLDLFINEIKLSKNSEFFDDEGLYRVCSDLLLSGTETSSSTMSWLLLFLINNPNFQDKVRTELLEATGGKKTIGLTEKSKTPFFNACIKEALRIRPVGALSLPRIASEDVTCGPYTIEKGSQIIMNVYGLAMDPTVWEDPETFNPYRWLSSDISQSTYSFIPFGCGSRVCVGSSLARDEIFLGIGNILLNYIFESQNGKPINEKGHFGIALQTVDYNVKLTKI.

The chain crosses the membrane as a helical span at residues Met1–Asn21. Heme is bound at residue Cys434.

This sequence belongs to the cytochrome P450 family. Heme serves as cofactor.

The protein localises to the membrane. This is Probable cytochrome P450 516A1 (cyp516A1) from Dictyostelium discoideum (Social amoeba).